Here is a 203-residue protein sequence, read N- to C-terminus: Urease accessory protein UreG (203 aa).

A GTP-binding site is contributed by 11–18 (GPVGSGKT).

It belongs to the SIMIBI class G3E GTPase family. UreG subfamily. As to quaternary structure, homodimer. UreD, UreF and UreG form a complex that acts as a GTP-hydrolysis-dependent molecular chaperone, activating the urease apoprotein by helping to assemble the nickel containing metallocenter of UreC. The UreE protein probably delivers the nickel.

It localises to the cytoplasm. Its function is as follows. Facilitates the functional incorporation of the urease nickel metallocenter. This process requires GTP hydrolysis, probably effectuated by UreG. In Prochlorococcus marinus (strain MIT 9312), this protein is Urease accessory protein UreG.